The following is a 280-amino-acid chain: Putative pyruvate, phosphate dikinase regulatory protein (280 aa).

Residue 152–159 (GISRTSKT) participates in ADP binding.

It belongs to the pyruvate, phosphate/water dikinase regulatory protein family. PDRP subfamily.

The enzyme catalyses N(tele)-phospho-L-histidyl/L-threonyl-[pyruvate, phosphate dikinase] + ADP = N(tele)-phospho-L-histidyl/O-phospho-L-threonyl-[pyruvate, phosphate dikinase] + AMP + H(+). It carries out the reaction N(tele)-phospho-L-histidyl/O-phospho-L-threonyl-[pyruvate, phosphate dikinase] + phosphate + H(+) = N(tele)-phospho-L-histidyl/L-threonyl-[pyruvate, phosphate dikinase] + diphosphate. Bifunctional serine/threonine kinase and phosphorylase involved in the regulation of the pyruvate, phosphate dikinase (PPDK) by catalyzing its phosphorylation/dephosphorylation. In Clostridioides difficile (strain 630) (Peptoclostridium difficile), this protein is Putative pyruvate, phosphate dikinase regulatory protein.